A 542-amino-acid polypeptide reads, in one-letter code: GMP synthase [glutamine-hydrolyzing] (542 aa).

The 191-residue stretch at 28–218 (IIVILDFGSQ…VYHICHCEPT (191 aa)) folds into the Glutamine amidotransferase type-1 domain. Cys105 (nucleophile) is an active-site residue. Catalysis depends on residues His192 and Glu194. The 199-residue stretch at 219-417 (WTTAAFIEES…IGLPEEIVRR (199 aa)) folds into the GMPS ATP-PPase domain. 246–252 (SGGVDSS) is an ATP binding site.

As to quaternary structure, homodimer.

It carries out the reaction XMP + L-glutamine + ATP + H2O = GMP + L-glutamate + AMP + diphosphate + 2 H(+). Its pathway is purine metabolism; GMP biosynthesis; GMP from XMP (L-Gln route): step 1/1. Functionally, catalyzes the synthesis of GMP from XMP. The chain is GMP synthase [glutamine-hydrolyzing] (guaA) from Synechocystis sp. (strain ATCC 27184 / PCC 6803 / Kazusa).